Consider the following 274-residue polypeptide: Syntaxin-12 (274 aa).

2 disordered regions span residues 1-20 (MSYGPLDMYRNPGPSGPQPR) and 128-147 (EKESIARARAGSRLSAEDRQ). S2 is modified (N-acetylserine). The Cytoplasmic segment spans residues 2-250 (SYGPLDMYRN…AYYQKKSRKK (249 aa)). Positions 33–130 (IQRISQATAQ…QRKVSEKEKE (98 aa)) form a coiled coil. Residues S139, S142, S218, and S225 each carry the phosphoserine modification. One can recognise a t-SNARE coiled-coil homology domain in the interval 178 to 240 (LELIKERETA…ERATDQLQRA (63 aa)). Residues 251–271 (MCILVLVLSVIVTVLVVVIWV) form a helical; Anchor for type IV membrane protein membrane-spanning segment. Topologically, residues 272–274 (ASK) are vesicular.

It belongs to the syntaxin family. Associates with the BLOC-1 complex. Interacts with BLOC1S6. Interacts with NAPA and SNAP23. Identified in a complex containing STX6, STX12, VAMP4 and VTI1A. Interacts with GRIPAP1. Forms a complex with GRIP1, GRIA2 and NSG1; controls the intracellular fate of AMPAR and the endosomal sorting of the GRIA2 subunit toward recycling and membrane targeting. Interacts with NSG1. Interacts with TPC1. Interacts (via N-terminus) with VPS13B.

The protein localises to the endosome membrane. The protein resides in the golgi apparatus membrane. It localises to the endomembrane system. It is found in the early endosome membrane. Its subcellular location is the recycling endosome membrane. Its function is as follows. SNARE promoting fusion of transport vesicles with target membranes. Together with SNARE STX6, promotes movement of vesicles from endosomes to the cell membrane, and may therefore function in the endocytic recycling pathway. Through complex formation with GRIP1, GRIA2 and NSG1 controls the intracellular fate of AMPAR and the endosomal sorting of the GRIA2 subunit toward recycling and membrane targeting. The sequence is that of Syntaxin-12 (Stx12) from Mus musculus (Mouse).